The primary structure comprises 528 residues: Extracellular serine/threonine protein CG31145 (528 aa).

Residues 1–12 (MAVLRTMKLKER) lie on the Cytoplasmic side of the membrane. Residues 1-76 (MAVLRTMKLK…LHEFKRKFLQ (76 aa)) constitute a propeptide that is removed on maturation. The helical transmembrane segment at 13-33 (LVISLGATLVLLTLLLIVDVQ) threads the bilayer. The Lumenal portion of the chain corresponds to 34–528 (MDFGVANRHL…VDGSETDVSS (495 aa)). Positions 77-130 (KSNASGSKEASTQAGASQSGGATSGQDAAAGASGGAAGPGTSRSTSTRKPTPHD) are disordered. An N-linked (GlcNAc...) asparagine glycan is attached at N79. The segment covering 86 to 107 (ASTQAGASQSGGATSGQDAAAG) has biased composition (low complexity). Residue N173 is glycosylated (N-linked (GlcNAc...) asparagine). Residues Q220, K236, and E257 each coordinate ATP. E257 is a Mn(2+) binding site. The N-linked (GlcNAc...) asparagine glycan is linked to N286. 2 disulfides stabilise this stretch: C312–C328 and C317–C321. Position 339–342 (339–342 (AAFL)) interacts with ATP. 2 disulfides stabilise this stretch: C376-C450 and C451-C510. D408 is an active-site residue. An ATP-binding site is contributed by E413. N420 carries an N-linked (GlcNAc...) asparagine glycan. D428 lines the ATP pocket. D428 contributes to the Mn(2+) binding site.

It belongs to the FAM20 family. The cofactor is Mn(2+). In terms of tissue distribution, in embryos, prominently expressed in midline glia, salivary gland, intestine and dorsal vessel (heart). Not associated with biomineralization.

The protein localises to the golgi apparatus membrane. Its subcellular location is the secreted. It catalyses the reaction L-seryl-[protein] + ATP = O-phospho-L-seryl-[protein] + ADP + H(+). The enzyme catalyses L-threonyl-[protein] + ATP = O-phospho-L-threonyl-[protein] + ADP + H(+). In terms of biological role, golgi serine/threonine protein kinase that phosphorylates secretory pathway proteins within Ser-x-Glu/pSer motifs. This Drosophila melanogaster (Fruit fly) protein is Extracellular serine/threonine protein CG31145.